Here is a 212-residue protein sequence, read N- to C-terminus: Peptide methionine sulfoxide reductase MsrA (212 aa).

Cys-52 is a catalytic residue.

Belongs to the MsrA Met sulfoxide reductase family.

It catalyses the reaction L-methionyl-[protein] + [thioredoxin]-disulfide + H2O = L-methionyl-(S)-S-oxide-[protein] + [thioredoxin]-dithiol. It carries out the reaction [thioredoxin]-disulfide + L-methionine + H2O = L-methionine (S)-S-oxide + [thioredoxin]-dithiol. Functionally, has an important function as a repair enzyme for proteins that have been inactivated by oxidation. Catalyzes the reversible oxidation-reduction of methionine sulfoxide in proteins to methionine. The sequence is that of Peptide methionine sulfoxide reductase MsrA from Escherichia coli (strain ATCC 8739 / DSM 1576 / NBRC 3972 / NCIMB 8545 / WDCM 00012 / Crooks).